The sequence spans 454 residues: tRNA modification GTPase MnmE (454 aa).

Arginine 23, glutamate 80, and lysine 120 together coordinate (6S)-5-formyl-5,6,7,8-tetrahydrofolate. A TrmE-type G domain is found at 216 to 377; it reads GMKVVIAGRP…LRNHLKQSMG (162 aa). Asparagine 226 is a K(+) binding site. Residues 226 to 231, 245 to 251, 270 to 273, 335 to 338, and 358 to 360 each bind GTP; these read NAGKSS, TDIAGTT, DTAG, NKAD, and SAR. Serine 230 contributes to the Mg(2+) binding site. K(+)-binding residues include threonine 245, isoleucine 247, and threonine 250. Threonine 251 lines the Mg(2+) pocket. Lysine 454 provides a ligand contact to (6S)-5-formyl-5,6,7,8-tetrahydrofolate.

This sequence belongs to the TRAFAC class TrmE-Era-EngA-EngB-Septin-like GTPase superfamily. TrmE GTPase family. As to quaternary structure, homodimer. Heterotetramer of two MnmE and two MnmG subunits. It depends on K(+) as a cofactor.

It localises to the cytoplasm. Its function is as follows. Exhibits a very high intrinsic GTPase hydrolysis rate. Involved in the addition of a carboxymethylaminomethyl (cmnm) group at the wobble position (U34) of certain tRNAs, forming tRNA-cmnm(5)s(2)U34. This is tRNA modification GTPase MnmE from Enterobacter sp. (strain 638).